A 117-amino-acid polypeptide reads, in one-letter code: Large ribosomal subunit protein bL20 (117 aa).

The protein belongs to the bacterial ribosomal protein bL20 family.

Its function is as follows. Binds directly to 23S ribosomal RNA and is necessary for the in vitro assembly process of the 50S ribosomal subunit. It is not involved in the protein synthesizing functions of that subunit. The chain is Large ribosomal subunit protein bL20 from Mesomycoplasma hyopneumoniae (strain 232) (Mycoplasma hyopneumoniae).